Consider the following 195-residue polypeptide: FK506-binding protein 2 (195 aa).

An N-terminal signal peptide occupies residues 1–19 (MKAALFLSALASTAVGVVA). The PPIase FKBP-type domain maps to 39 to 127 (GDGVHMHYRG…VFETELVGID (89 aa)). Positions 192–195 (HEEL) match the Prevents secretion from ER motif.

This sequence belongs to the FKBP-type PPIase family. FKBP2 subfamily.

It is found in the endoplasmic reticulum. The enzyme catalyses [protein]-peptidylproline (omega=180) = [protein]-peptidylproline (omega=0). With respect to regulation, inhibited by both FK506 and rapamycin. PPIases accelerate the folding of proteins. It catalyzes the cis-trans isomerization of proline imidic peptide bonds in oligopeptides. This is FK506-binding protein 2 (FPR2) from Gibberella zeae (strain ATCC MYA-4620 / CBS 123657 / FGSC 9075 / NRRL 31084 / PH-1) (Wheat head blight fungus).